The following is a 410-amino-acid chain: Gamma-glutamyl phosphate reductase (410 aa).

This sequence belongs to the gamma-glutamyl phosphate reductase family.

Its subcellular location is the cytoplasm. It catalyses the reaction L-glutamate 5-semialdehyde + phosphate + NADP(+) = L-glutamyl 5-phosphate + NADPH + H(+). Its pathway is amino-acid biosynthesis; L-proline biosynthesis; L-glutamate 5-semialdehyde from L-glutamate: step 2/2. Catalyzes the NADPH-dependent reduction of L-glutamate 5-phosphate into L-glutamate 5-semialdehyde and phosphate. The product spontaneously undergoes cyclization to form 1-pyrroline-5-carboxylate. The polypeptide is Gamma-glutamyl phosphate reductase (Sulfurovum sp. (strain NBC37-1)).